A 548-amino-acid polypeptide reads, in one-letter code: Chaperonin GroEL (548 aa).

Residues 30–33 (TLGP), K51, 87–91 (DGTTT), G415, 479–481 (NAA), and D495 each bind ATP.

It belongs to the chaperonin (HSP60) family. As to quaternary structure, forms a cylinder of 14 subunits composed of two heptameric rings stacked back-to-back. Interacts with the co-chaperonin GroES.

It is found in the cytoplasm. The catalysed reaction is ATP + H2O + a folded polypeptide = ADP + phosphate + an unfolded polypeptide.. Functionally, together with its co-chaperonin GroES, plays an essential role in assisting protein folding. The GroEL-GroES system forms a nano-cage that allows encapsulation of the non-native substrate proteins and provides a physical environment optimized to promote and accelerate protein folding. This Methylibium petroleiphilum (strain ATCC BAA-1232 / LMG 22953 / PM1) protein is Chaperonin GroEL.